The following is a 291-amino-acid chain: 33 kDa chaperonin (291 aa).

Cystine bridges form between cysteine 237-cysteine 239 and cysteine 270-cysteine 273.

This sequence belongs to the HSP33 family. Post-translationally, under oxidizing conditions two disulfide bonds are formed involving the reactive cysteines. Under reducing conditions zinc is bound to the reactive cysteines and the protein is inactive.

The protein localises to the cytoplasm. Redox regulated molecular chaperone. Protects both thermally unfolding and oxidatively damaged proteins from irreversible aggregation. Plays an important role in the bacterial defense system toward oxidative stress. This Bacillus anthracis (strain A0248) protein is 33 kDa chaperonin.